Consider the following 88-residue polypeptide: Large ribosomal subunit protein bL27 (88 aa).

Residues 1 to 21 (MAHKKAGGSSRNGRDSDGRRL) are disordered.

This sequence belongs to the bacterial ribosomal protein bL27 family.

This is Large ribosomal subunit protein bL27 from Methylobacterium nodulans (strain LMG 21967 / CNCM I-2342 / ORS 2060).